We begin with the raw amino-acid sequence, 87 residues long: Small ribosomal subunit protein bS20 (87 aa).

It belongs to the bacterial ribosomal protein bS20 family.

Functionally, binds directly to 16S ribosomal RNA. This Brachyspira hyodysenteriae (strain ATCC 49526 / WA1) protein is Small ribosomal subunit protein bS20.